A 467-amino-acid chain; its full sequence is Transcription factor fos-1 (467 aa).

The segment covering 1-22 has biased composition (low complexity); that stretch reads MFEQPSSTTNTTTSSGSGSDSN. Disordered regions lie at residues 1-38 and 139-179; these read MFEQ…QAHP and QYST…AAAR. The bZIP domain occupies 163-226; the sequence is DDKRLKRRQR…NSLKNYLETH (64 aa). Positions 165–205 are basic motif; it reads KRLKRRQRNKEAAARCRQRRIDLMKELQDQVNDFKNSNDKK. Residues 212–219 form a leucine-zipper region; the sequence is IRNKLNSL. Disordered regions lie at residues 266-291 and 395-467; these read RADS…PVED and QPIT…LRPL. Over residues 273–286 the composition is skewed to low complexity; sequence SIRSGHSSSSSEQH. Positions 434 to 454 are enriched in polar residues; that stretch reads SSNTGLTPSGQPTMNFVSTPT. 3 positions are modified to phosphothreonine: Thr-440, Thr-452, and Thr-454.

It belongs to the bZIP family. Fos subfamily. Homodimer. Heterodimer; with jun-1. Interacts with kgb-1 and hda-1. Post-translationally, may be phosphorylated by kgb-1. Phosphorylation at Thr-440 increases sensitivity to heavy metal stress. Phosphorylation inhibits homodimer formation, and promotes association with target promoters. As to expression, expressed in anchor cells. Isoform a is expressed in somatic gonad cells that neighbor anchor cells. Isoform b is expressed in vulval cells, the uterine cells that neighbor anchor cells and the spermatheca.

It localises to the nucleus. Developmentally regulated transcription factor which binds and recognizes the enhancer DNA sequence 5'-TGA[CG]TCA-3'. In terms of biological role, plays a role the development of the reproductive system, controlling events including anchor cell (AC) fusion and invasion. Regulates downstream transcriptional targets, including zmp-1, cdh-3, him-4 and mig10b, to promote the removal of the gonadal basement membrane during AC invasion. Regulates aff-1 expression to promote AC fusion. With jun-1 regulates egl-1 and lin-12 expression to allow uterine cell specification and development. Its function is as follows. Required for ovulation. Controls plc-1 expression in the spermatheca to regulate spermathecal valve dilation. Acts with hda-1 as a downstream repressor of the kgb-1 mediated stress response pathway that transcriptionally represses genes involved in the response to heavy metals, such as kreg-1. This is Transcription factor fos-1 from Caenorhabditis elegans.